Consider the following 360-residue polypeptide: Phospho-N-acetylmuramoyl-pentapeptide-transferase (360 aa).

10 helical membrane passes run 21–41 (YLTLRAILSTLTALLIAILIG), 73–93 (TMGGLLILAAIVVSGLLWADL), 97–117 (YVLVTLTVVVAYGIIGFVDDY), 134–154 (YFWQSVVALGVAFYLYSSATM), 168–188 (VFPQLGIFFIIITYFAIVGTS), 199–219 (GLAIVPTILVAGAFAIFAYVT), 239–259 (LVIVCTAMVGAGLGFLWFNTY), 263–283 (VFMGDVGSLALGGTLGVLAVL), 288–308 (LVLIIMGGVFVMETLSVILQV), and 338–358 (VIVRFWIISIILVLVGLATLK).

It belongs to the glycosyltransferase 4 family. MraY subfamily. It depends on Mg(2+) as a cofactor.

The protein localises to the cell inner membrane. The enzyme catalyses UDP-N-acetyl-alpha-D-muramoyl-L-alanyl-gamma-D-glutamyl-meso-2,6-diaminopimeloyl-D-alanyl-D-alanine + di-trans,octa-cis-undecaprenyl phosphate = di-trans,octa-cis-undecaprenyl diphospho-N-acetyl-alpha-D-muramoyl-L-alanyl-D-glutamyl-meso-2,6-diaminopimeloyl-D-alanyl-D-alanine + UMP. It participates in cell wall biogenesis; peptidoglycan biosynthesis. Its function is as follows. Catalyzes the initial step of the lipid cycle reactions in the biosynthesis of the cell wall peptidoglycan: transfers peptidoglycan precursor phospho-MurNAc-pentapeptide from UDP-MurNAc-pentapeptide onto the lipid carrier undecaprenyl phosphate, yielding undecaprenyl-pyrophosphoryl-MurNAc-pentapeptide, known as lipid I. This chain is Phospho-N-acetylmuramoyl-pentapeptide-transferase, found in Alteromonas mediterranea (strain DSM 17117 / CIP 110805 / LMG 28347 / Deep ecotype).